A 507-amino-acid chain; its full sequence is Beta-glucosidase 13 (507 aa).

A signal peptide spans methionine 1–alanine 22. Glutamine 50 serves as a coordination point for a beta-D-glucoside. A glycan (N-linked (GlcNAc...) asparagine) is linked at asparagine 81. A beta-D-glucoside-binding positions include histidine 154 and asparagine 199–glutamate 200. The active-site Proton donor is glutamate 200. A disulfide bridge links cysteine 219 with cysteine 227. Asparagine 226 carries an N-linked (GlcNAc...) asparagine glycan. Tyrosine 344 is a binding site for a beta-D-glucoside. An N-linked (GlcNAc...) asparagine glycan is attached at asparagine 358. Residues glutamate 414, tryptophan 459, glutamate 466 to tryptophan 467, and phenylalanine 475 each bind a beta-D-glucoside. Glutamate 414 acts as the Nucleophile in catalysis.

Belongs to the glycosyl hydrolase 1 family.

The enzyme catalyses Hydrolysis of terminal, non-reducing beta-D-glucosyl residues with release of beta-D-glucose.. The sequence is that of Beta-glucosidase 13 from Arabidopsis thaliana (Mouse-ear cress).